The following is a 93-amino-acid chain: Small ribosomal subunit protein uS19 (93 aa).

Belongs to the universal ribosomal protein uS19 family.

Its function is as follows. Protein S19 forms a complex with S13 that binds strongly to the 16S ribosomal RNA. In Dehalococcoides mccartyi (strain ATCC BAA-2100 / JCM 16839 / KCTC 5957 / BAV1), this protein is Small ribosomal subunit protein uS19.